The chain runs to 583 residues: CTP synthase (583 aa).

The segment at 1–278 (MRRHPQTATK…DAFVVRRLNL (278 aa)) is amidoligase domain. CTP is bound at residue Ser-20. Ser-20 contacts UTP. ATP contacts are provided by residues 21 to 26 (SLGKGL) and Asp-78. Mg(2+) is bound by residues Asp-78 and Glu-152. CTP is bound by residues 159–161 (DIE), 199–204 (KTKPTQ), and Lys-235. UTP contacts are provided by residues 199 to 204 (KTKPTQ) and Lys-235. Residues 303-551 (RIALVGKYVE…VKAAIDYKEG (249 aa)) form the Glutamine amidotransferase type-1 domain. Residue Gly-366 coordinates L-glutamine. The active-site Nucleophile; for glutamine hydrolysis is Cys-393. L-glutamine contacts are provided by residues 394-397 (LGLQ), Glu-416, and Arg-477. Active-site residues include His-524 and Glu-526. The disordered stretch occupies residues 559–583 (PERVSNGAERRDQVGQSIPEPANRG).

The protein belongs to the CTP synthase family. In terms of assembly, homotetramer.

The catalysed reaction is UTP + L-glutamine + ATP + H2O = CTP + L-glutamate + ADP + phosphate + 2 H(+). The enzyme catalyses L-glutamine + H2O = L-glutamate + NH4(+). It carries out the reaction UTP + NH4(+) + ATP = CTP + ADP + phosphate + 2 H(+). It participates in pyrimidine metabolism; CTP biosynthesis via de novo pathway; CTP from UDP: step 2/2. Its activity is regulated as follows. Allosterically activated by GTP, when glutamine is the substrate; GTP has no effect on the reaction when ammonia is the substrate. The allosteric effector GTP functions by stabilizing the protein conformation that binds the tetrahedral intermediate(s) formed during glutamine hydrolysis. Inhibited by the product CTP, via allosteric rather than competitive inhibition. In terms of biological role, catalyzes the ATP-dependent amination of UTP to CTP with either L-glutamine or ammonia as the source of nitrogen. Regulates intracellular CTP levels through interactions with the four ribonucleotide triphosphates. The protein is CTP synthase of Mycobacterium ulcerans (strain Agy99).